A 573-amino-acid polypeptide reads, in one-letter code: Splicing factor U2af large subunit A (573 aa).

Residues 1 to 175 (MSEFEDHEGN…KSKQRVSGFD (175 aa)) form a disordered region. Residues 22–93 (NGGRDGEIED…ERSRDKDRDH (72 aa)) show a composition bias toward basic and acidic residues. Residues 94–105 (RERHHRSSRHRD) are compositionally biased toward basic residues. A compositionally biased stretch (basic and acidic residues) spans 106-141 (HSRERGERRERGGRDDDDYRRSRDRDHDRRRDDRGG). Residues 159 to 169 (TRSRSPSKSKQ) are compositionally biased toward basic residues. RRM domains lie at 239–322 (RRVY…RPSD), 359–437 (DRIF…RANQ), and 478–564 (QVVT…YPED).

The protein belongs to the splicing factor SR family. As to quaternary structure, component of the spliceosome. Interacts with SUA. Interacts with SF1 in the nucleus.

Its subcellular location is the nucleus. Its function is as follows. Necessary for the splicing of pre-mRNA. This is Splicing factor U2af large subunit A from Arabidopsis thaliana (Mouse-ear cress).